A 414-amino-acid polypeptide reads, in one-letter code: Succinylornithine transaminase (414 aa).

Lys260 is modified (N6-(pyridoxal phosphate)lysine).

It belongs to the class-III pyridoxal-phosphate-dependent aminotransferase family. AstC subfamily. The cofactor is pyridoxal 5'-phosphate.

The catalysed reaction is N(2)-succinyl-L-ornithine + 2-oxoglutarate = N-succinyl-L-glutamate 5-semialdehyde + L-glutamate. It participates in amino-acid degradation; L-arginine degradation via AST pathway; L-glutamate and succinate from L-arginine: step 3/5. Functionally, catalyzes the transamination of N(2)-succinylornithine and alpha-ketoglutarate into N(2)-succinylglutamate semialdehyde and glutamate. Can also act as an acetylornithine aminotransferase. The polypeptide is Succinylornithine transaminase (Yersinia pseudotuberculosis serotype O:1b (strain IP 31758)).